The chain runs to 311 residues: Beta-lactamase (311 aa).

Residues 1–36 (MRKPTSSLTRRSVLGAGLGLGGALALGSTTASAASA) constitute a signal peptide (tat-type signal). The active-site Acyl-ester intermediate is the S86. 252-254 (KSG) provides a ligand contact to substrate.

This sequence belongs to the class-A beta-lactamase family. Post-translationally, predicted to be exported by the Tat system. The position of the signal peptide cleavage has not been experimentally proven.

It catalyses the reaction a beta-lactam + H2O = a substituted beta-amino acid. In terms of biological role, hydrolyzes benzylpenicillin and cloxacillin (at 10% of the rate of benzylpenicillin). The sequence is that of Beta-lactamase (bla) from Streptomyces cellulosae.